Here is a 170-residue protein sequence, read N- to C-terminus: NAD(P)H-quinone oxidoreductase subunit I, chloroplastic (170 aa).

4Fe-4S ferredoxin-type domains are found at residues 55-84 and 95-124; these read GRIH…VDWK and LNYS…MTEE. Residues cysteine 64, cysteine 67, cysteine 70, cysteine 74, cysteine 104, cysteine 107, cysteine 110, and cysteine 114 each coordinate [4Fe-4S] cluster.

It belongs to the complex I 23 kDa subunit family. In terms of assembly, NDH is composed of at least 16 different subunits, 5 of which are encoded in the nucleus. [4Fe-4S] cluster serves as cofactor.

It localises to the plastid. Its subcellular location is the chloroplast thylakoid membrane. The enzyme catalyses a plastoquinone + NADH + (n+1) H(+)(in) = a plastoquinol + NAD(+) + n H(+)(out). It catalyses the reaction a plastoquinone + NADPH + (n+1) H(+)(in) = a plastoquinol + NADP(+) + n H(+)(out). Its function is as follows. NDH shuttles electrons from NAD(P)H:plastoquinone, via FMN and iron-sulfur (Fe-S) centers, to quinones in the photosynthetic chain and possibly in a chloroplast respiratory chain. The immediate electron acceptor for the enzyme in this species is believed to be plastoquinone. Couples the redox reaction to proton translocation, and thus conserves the redox energy in a proton gradient. The chain is NAD(P)H-quinone oxidoreductase subunit I, chloroplastic from Spinacia oleracea (Spinach).